Consider the following 360-residue polypeptide: Fructose-bisphosphate aldolase 1 (360 aa).

S63 is a binding site for D-glyceraldehyde 3-phosphate. The active-site Proton donor is the D110. H111, D145, E175, and H227 together coordinate Zn(2+). G228 serves as a coordination point for dihydroxyacetone phosphate. Residue H266 participates in Zn(2+) binding. Position 267-269 (G267–S269) interacts with dihydroxyacetone phosphate.

Belongs to the class II fructose-bisphosphate aldolase family. As to quaternary structure, homodimer. The cofactor is Zn(2+).

The enzyme catalyses beta-D-fructose 1,6-bisphosphate = D-glyceraldehyde 3-phosphate + dihydroxyacetone phosphate. The protein operates within carbohydrate degradation; glycolysis; D-glyceraldehyde 3-phosphate and glycerone phosphate from D-glucose: step 4/4. Its function is as follows. Catalyzes the aldol condensation of dihydroxyacetone phosphate (DHAP or glycerone-phosphate) with glyceraldehyde 3-phosphate (G3P) to form fructose 1,6-bisphosphate (FBP) in gluconeogenesis and the reverse reaction in glycolysis. The sequence is that of Fructose-bisphosphate aldolase 1 (FBA1) from Paracoccidioides lutzii (strain ATCC MYA-826 / Pb01) (Paracoccidioides brasiliensis).